Consider the following 359-residue polypeptide: Tropomodulin-1 (359 aa).

The segment at E36–P61 is disordered. Residues P39–H138 are tropomyosin-binding.

It belongs to the tropomodulin family. Binds to the N-terminus of tropomyosin and to actin. Interacts with FLII. As to expression, highly expressed in the erythrocyte, heart and skeletal muscle.

The protein resides in the cytoplasm. The protein localises to the cytoskeleton. In terms of biological role, blocks the elongation and depolymerization of the actin filaments at the pointed end. The Tmod/TM complex contributes to the formation of the short actin protofilament, which in turn defines the geometry of the membrane skeleton. The sequence is that of Tropomodulin-1 (Tmod1) from Mus musculus (Mouse).